Here is a 192-residue protein sequence, read N- to C-terminus: MKTILSTQTVDIPDNVDVTLKGRTVSVKGPRGVLRREFNHINLELRLLGKKQKKLRVDKWWGNRKELATVRTICSHVQNMIKGVTLGFRYKMRSVYAHFPINVVIQETGSLVEIRNFLGEKYIRRVRMRPGVNCALSAAQKDELVLEGNDIELVSNSAALIQQATTVKNKDIRKFLDGIYVSEKGTVVEPES.

It belongs to the universal ribosomal protein uL6 family. Component of the large ribosomal subunit.

The protein localises to the cytoplasm. In terms of biological role, component of the large ribosomal subunit. The ribosome is a large ribonucleoprotein complex responsible for the synthesis of proteins in the cell. The sequence is that of Large ribosomal subunit protein uL6 (rpl9) from Ictalurus punctatus (Channel catfish).